Consider the following 494-residue polypeptide: MNASALFKKIRVKNVIGTLDIQVDDITTDSRTAKEGSLFVASKGYTVDSHKFCQNVVDQGCGIVVVNRELELKGNVTQVVVPDTLRVASLLAHELYEFPSHQLTTYGVTGTNGKTSIATMIHLIYRKLNKNSAYLGTNGFQVNETKTKGANTTPETVALTKKIKEAVDANAEAMTMEVSSHGLALGRLRGVEFDVAIFSNLTQDHLDFHGTMEAYGHAKSLLFSQLGEDLSKEKYVVLNNDDDFSDYLASVTPYEVFTYGITHEAQFMAKNIKESLQGVEFEFCTPFGSFPVKSPYVGRFNISNIMAAMIAVWSKGTNLNEIINAVTELEPVEGRLEVLDPSLPIDLIIDYAHTADGMNKLIDAVQPFVKQKLIFLVGMAGERDLTKTPEMGRVACRADYVIFTPDNPANDDPKMLTAELAKGATHNNYIEFDDRAEGIRHAIDIAEPGDTVVLASKGREPYQIMPGHVKVPHRDDLIGLKAAYQKFGGGPLED.

A UDP-N-acetyl-alpha-D-muramoyl-L-alanyl-D-glutamate-binding site is contributed by Ser-30. Gly-110–Ser-116 contacts ATP. UDP-N-acetyl-alpha-D-muramoyl-L-alanyl-D-glutamate contacts are provided by residues Thr-152–Thr-153, Ser-179, and Arg-187. Residue Lys-219 is modified to N6-carboxylysine. Residues Asp-406–Ala-409 carry the L-lysine recognition motif motif.

Belongs to the MurCDEF family. MurE subfamily. Post-translationally, carboxylation is probably crucial for Mg(2+) binding and, consequently, for the gamma-phosphate positioning of ATP.

The protein resides in the cytoplasm. It carries out the reaction UDP-N-acetyl-alpha-D-muramoyl-L-alanyl-D-glutamate + L-lysine + ATP = UDP-N-acetyl-alpha-D-muramoyl-L-alanyl-gamma-D-glutamyl-L-lysine + ADP + phosphate + H(+). The protein operates within cell wall biogenesis; peptidoglycan biosynthesis. In terms of biological role, catalyzes the addition of L-lysine to the nucleotide precursor UDP-N-acetylmuramoyl-L-alanyl-D-glutamate (UMAG) in the biosynthesis of bacterial cell-wall peptidoglycan. In Staphylococcus epidermidis (strain ATCC 35984 / DSM 28319 / BCRC 17069 / CCUG 31568 / BM 3577 / RP62A), this protein is UDP-N-acetylmuramoyl-L-alanyl-D-glutamate--L-lysine ligase.